We begin with the raw amino-acid sequence, 397 residues long: Argininosuccinate synthase (397 aa).

8–16 (AYSGGLDTS) is a binding site for ATP. Positions 86 and 91 each coordinate L-citrulline. Gly-116 serves as a coordination point for ATP. L-aspartate is bound by residues Thr-118, Asn-122, and Asp-123. An L-citrulline-binding site is contributed by Asn-122. Residues Arg-126, Ser-175, Ser-184, Glu-260, and Tyr-272 each coordinate L-citrulline.

Belongs to the argininosuccinate synthase family. Type 1 subfamily. In terms of assembly, homotetramer.

Its subcellular location is the cytoplasm. It catalyses the reaction L-citrulline + L-aspartate + ATP = 2-(N(omega)-L-arginino)succinate + AMP + diphosphate + H(+). It participates in amino-acid biosynthesis; L-arginine biosynthesis; L-arginine from L-ornithine and carbamoyl phosphate: step 2/3. The protein is Argininosuccinate synthase of Clostridium botulinum (strain Langeland / NCTC 10281 / Type F).